The chain runs to 451 residues: uncharacterized protein (451 aa).

The tract at residues 415–435 is disordered; it reads AHGDTEWLPPPHLDHGQPRVN.

The protein belongs to the Rv1128c/1148c/1588c/1702c/1945/3466 family.

This is an uncharacterized protein from Mycobacterium tuberculosis (strain ATCC 25618 / H37Rv).